The chain runs to 2174 residues: Mediator of RNA polymerase II transcription subunit 13 (2174 aa).

S395 carries the phosphoserine modification. The disordered stretch occupies residues 435 to 477 (RNAGQQGQAPSLGQQQQILPKHKTNEKQEKSEKPQKRPLTPFH). Positions 438-451 (GQQGQAPSLGQQQQ) are enriched in low complexity. Over residues 457–469 (KTNEKQEKSEKPQ) the composition is skewed to basic and acidic residues. 4 positions are modified to phosphoserine: S500, S504, S530, and S537. Residues 709 to 730 (FPDKKDRQNSEREAGKKHKVED) show a composition bias toward basic and acidic residues. Disordered stretches follow at residues 709–735 (FPDK…TSSV), 749–769 (SPSI…PSTS), and 787–816 (FNSD…ESKT). The span at 805-815 (SDDKASCKESK) shows a compositional bias: basic and acidic residues. Residues S826 and S890 each carry the phosphoserine modification. The interval 959 to 1054 (FIKEGDGSNM…ASTPSTCRPL (96 aa)) is disordered. Residues 992 to 1003 (PPSNSGAGILPS) are compositionally biased toward low complexity. The segment covering 1004 to 1015 (PSTPRFPTPRTP) has biased composition (pro residues). The residue at position 1029 (S1029) is a Phosphoserine. Positions 1040–1053 (DLYSPASTPSTCRP) are enriched in polar residues. 2 short sequence motifs (LXXLL motif) span residues 1188–1192 (LILLL) and 1279–1283 (LRMLL). Polar residues-rich tracts occupy residues 1484-1498 (SQSL…NTGN) and 1563-1606 (SMNS…SLPT). 3 disordered regions span residues 1484–1505 (SQSL…PSAT), 1557–1617 (SFPP…ESTM), and 2015–2048 (LPAS…RLLS).

This sequence belongs to the Mediator complex subunit 13 family. In terms of assembly, component of the Mediator complex, which is composed of MED1, MED4, MED6, MED7, MED8, MED9, MED10, MED11, MED12, MED13, MED13L, MED14, MED15, MED16, MED17, MED18, MED19, MED20, MED21, MED22, MED23, MED24, MED25, MED26, MED27, MED29, MED30, MED31, CCNC, CDK8 and CDC2L6/CDK11. The MED12, MED13, CCNC and CDK8 subunits form a distinct module termed the CDK8 module. Mediator containing the CDK8 module is less active than Mediator lacking this module in supporting transcriptional activation. Individual preparations of the Mediator complex lacking one or more distinct subunits have been variously termed ARC, CRSP, DRIP, PC2, SMCC and TRAP. As to expression, ubiquitous.

It localises to the nucleus. Component of the Mediator complex, a coactivator involved in the regulated transcription of nearly all RNA polymerase II-dependent genes. Mediator functions as a bridge to convey information from gene-specific regulatory proteins to the basal RNA polymerase II transcription machinery. Mediator is recruited to promoters by direct interactions with regulatory proteins and serves as a scaffold for the assembly of a functional preinitiation complex with RNA polymerase II and the general transcription factors. In Homo sapiens (Human), this protein is Mediator of RNA polymerase II transcription subunit 13.